Here is an 85-residue protein sequence, read N- to C-terminus: Cell division topological specificity factor (85 aa).

The protein belongs to the MinE family.

Its function is as follows. Prevents the cell division inhibition by proteins MinC and MinD at internal division sites while permitting inhibition at polar sites. This ensures cell division at the proper site by restricting the formation of a division septum at the midpoint of the long axis of the cell. In Thioalkalivibrio sulfidiphilus (strain HL-EbGR7), this protein is Cell division topological specificity factor.